A 312-amino-acid polypeptide reads, in one-letter code: MIVEVFFRNYYRNYAKLEVDEVEKREFAFQPFVGGMVRHKAFKNLEELKRHLVEKTPRHVYYSTARYERPWEEDMERKGWLGADLVFDIDGDHLDTEACRESKVVSLACLEDAKEEANKLIDVLTEELGLKPTKVVFSGNRGFHVHVVDEEVLALGQKERRELVNYLKAVGFDPSKFHMKVGRRKVVLYEEEAVGNLLRIRRGIEDPEALKVEVDEVVTQDVHRLIRAPGSLNGKTGLVALPLSVRDLEKEVAHIVERAIAFRKGNLRLRFEKPFQGTVLFEKVEAREGDIKTLPAHVAIYLELQEFGKIYD.

Residues Asp-88, Asp-90, and Asp-215 contribute to the active site.

This sequence belongs to the eukaryotic-type primase small subunit family. As to quaternary structure, heterodimer of a small subunit (PriS) and a large subunit (PriL). The cofactor is Mg(2+). Mn(2+) serves as cofactor.

Its function is as follows. Catalytic subunit of DNA primase, an RNA polymerase that catalyzes the synthesis of short RNA molecules used as primers for DNA polymerase during DNA replication. The small subunit contains the primase catalytic core and has DNA synthesis activity on its own. Binding to the large subunit stabilizes and modulates the activity, increasing the rate of DNA synthesis while decreasing the length of the DNA fragments, and conferring RNA synthesis capability. The DNA polymerase activity may enable DNA primase to also catalyze primer extension after primer synthesis. May also play a role in DNA repair. This is DNA primase small subunit PriS from Pyrobaculum calidifontis (strain DSM 21063 / JCM 11548 / VA1).